A 369-amino-acid polypeptide reads, in one-letter code: Nuclear hormone receptor family member nhr-64 (369 aa).

Positions E67–V142 form a DNA-binding region, nuclear receptor. NR C4-type zinc fingers lie at residues Q70–K90 and P106–R130. The NR LBD domain occupies P120–N352.

The protein belongs to the nuclear hormone receptor family.

The protein localises to the nucleus. In terms of biological role, orphan nuclear receptor. This Caenorhabditis elegans protein is Nuclear hormone receptor family member nhr-64 (nhr-64).